We begin with the raw amino-acid sequence, 141 residues long: MTAAVKWAVSHRTIWRHLFPIQNGAISSACHKSTYSSLPDDYNCKVELALTSDGRTIVCYHPSVDVPYEHTKPIPHPDLLHNNEETHEQILRTKLEGNHKHLEQGPMIEQLSKVFFTTKHRWYPHGQYHRCRKKLNPPKDR.

The N-terminal 31 residues, 1–31 (MTAAVKWAVSHRTIWRHLFPIQNGAISSACH), are a transit peptide targeting the mitochondrion.

The protein belongs to the mitochondrion-specific ribosomal protein mL42 family. In terms of assembly, component of the mitochondrial ribosome large subunit (39S) which comprises a 16S rRNA and about 50 distinct proteins. Component of the mitochondrial ribosome small subunit (28S) which comprises a 12S rRNA and about 30 distinct proteins.

It localises to the mitochondrion. This Rattus norvegicus (Rat) protein is Large ribosomal subunit protein mL42 (Mrpl42).